The primary structure comprises 283 residues: Thymidylate synthase (283 aa).

Arginine 22 is a dUMP binding site. Cysteine 160 serves as the catalytic Nucleophile. Residues 180 to 183, asparagine 191, and 221 to 223 each bind dUMP; these read RSCD and HIY. Position 183 (aspartate 183) interacts with (6R)-5,10-methylene-5,6,7,8-tetrahydrofolate. (6R)-5,10-methylene-5,6,7,8-tetrahydrofolate is bound at residue serine 282.

The protein belongs to the thymidylate synthase family. Bacterial-type ThyA subfamily. In terms of assembly, homodimer.

The protein localises to the cytoplasm. It carries out the reaction dUMP + (6R)-5,10-methylene-5,6,7,8-tetrahydrofolate = 7,8-dihydrofolate + dTMP. It participates in pyrimidine metabolism; dTTP biosynthesis. In terms of biological role, catalyzes the reductive methylation of 2'-deoxyuridine-5'-monophosphate (dUMP) to 2'-deoxythymidine-5'-monophosphate (dTMP) while utilizing 5,10-methylenetetrahydrofolate (mTHF) as the methyl donor and reductant in the reaction, yielding dihydrofolate (DHF) as a by-product. This enzymatic reaction provides an intracellular de novo source of dTMP, an essential precursor for DNA biosynthesis. This is Thymidylate synthase from Shewanella pealeana (strain ATCC 700345 / ANG-SQ1).